The primary structure comprises 280 residues: Dolichyl-diphosphooligosaccharide--protein glycosyltransferase subunit 2 (280 aa).

Residues 1-16 form the signal peptide; that stretch reads MKLLLVLLTIASVALA. The Lumenal portion of the chain corresponds to 17 to 187; the sequence is AVDDVAVNNF…FRQPEKRPSA (171 aa). A helical transmembrane segment spans residues 188-208; it reads LISDLFTIICLSPLLILVVLW. Topologically, residues 209–222 are cytoplasmic; that stretch reads SQVGINFQNAPASP. A helical membrane pass occupies residues 223–243; it reads WVPIFHVGLIGIFGIYFMFWV. Gln244 is a topological domain (lumenal). Residues 245-265 form a helical membrane-spanning segment; the sequence is FDMFVTLKYLAVLGFLTFVAG. Topologically, residues 266–280 are cytoplasmic; that stretch reads NRVLRAISESKQKSE.

Belongs to the SWP1 family. Component of the oligosaccharyltransferase (OST) complex.

The protein resides in the endoplasmic reticulum membrane. The protein operates within protein modification; protein glycosylation. Its function is as follows. Subunit of the oligosaccharyl transferase (OST) complex that catalyzes the initial transfer of a defined glycan (Glc(3)Man(9)GlcNAc(2) in eukaryotes) from the lipid carrier dolichol-pyrophosphate to an asparagine residue within an Asn-X-Ser/Thr consensus motif in nascent polypeptide chains, the first step in protein N-glycosylation. N-glycosylation occurs cotranslationally and the complex associates with the Sec61 complex at the channel-forming translocon complex that mediates protein translocation across the endoplasmic reticulum (ER). All subunits are required for a maximal enzyme activity. The protein is Dolichyl-diphosphooligosaccharide--protein glycosyltransferase subunit 2 of Caenorhabditis elegans.